We begin with the raw amino-acid sequence, 202 residues long: Small ribosomal subunit protein uS2 (202 aa).

The protein belongs to the universal ribosomal protein uS2 family. Part of the 30S ribosomal subunit.

This chain is Small ribosomal subunit protein uS2, found in Pyrococcus furiosus (strain ATCC 43587 / DSM 3638 / JCM 8422 / Vc1).